Consider the following 249-residue polypeptide: MLKKIKISLILALGLTSLQAFGQENPDVKIDKLKDNLYVYTTYNTFNGTKYAANAVYLVTDKGVVVIDCPWGEDKFKSFTDEIYKKHGKKVIMNIATHSHDDRAGGLEYFGKIGAKTYSTKMTDSILAKENKPRAQYTFDNNKSFKVGKSEFQVYYPGKGHTADNVVVWFPKEKVLVGGCIIKSADSKDLGYIGEAYVNDWTQSVHNIQQKFSGAQYVVAGHDDWKDQRSIQRTLDLINEYQQKQKASN.

Positions 1–22 (MLKKIKISLILALGLTSLQAFG) are cleaved as a signal peptide. The Zn(2+) site is built by H98, H100, D102, H161, and C180. K183 is a binding site for substrate. Zn(2+) is bound at residue H222.

The protein belongs to the metallo-beta-lactamase superfamily. Class-B beta-lactamase family. As to quaternary structure, monomer. It depends on Zn(2+) as a cofactor.

It is found in the periplasm. The enzyme catalyses a beta-lactam + H2O = a substituted beta-amino acid. In terms of biological role, confers resistance to the different beta-lactams antibiotics (penicillin, cephalosporin and carbapenem) via the hydrolysis of the beta-lactam ring. This Elizabethkingia meningoseptica (Chryseobacterium meningosepticum) protein is Metallo-beta-lactamase type 2 (blaB2).